The following is a 36-amino-acid chain: Photosystem II reaction center protein M (36 aa).

The helical transmembrane segment at 5–25 (ILGLIATALFIIIPTSFLLIL) threads the bilayer.

Belongs to the PsbM family. In terms of assembly, PSII is composed of 1 copy each of membrane proteins PsbA, PsbB, PsbC, PsbD, PsbE, PsbF, PsbH, PsbI, PsbJ, PsbK, PsbL, PsbM, PsbT, PsbX, PsbY, PsbZ, Psb30/Ycf12, at least 3 peripheral proteins of the oxygen-evolving complex and a large number of cofactors. It forms dimeric complexes.

Its subcellular location is the plastid. It is found in the chloroplast thylakoid membrane. In terms of biological role, one of the components of the core complex of photosystem II (PSII). PSII is a light-driven water:plastoquinone oxidoreductase that uses light energy to abstract electrons from H(2)O, generating O(2) and a proton gradient subsequently used for ATP formation. It consists of a core antenna complex that captures photons, and an electron transfer chain that converts photonic excitation into a charge separation. This subunit is found at the monomer-monomer interface. The polypeptide is Photosystem II reaction center protein M (Chlorokybus atmophyticus (Soil alga)).